Consider the following 860-residue polypeptide: Pentatricopeptide repeat-containing protein At1g18900 (860 aa).

8 PPR repeats span residues 363 to 397 (DGHTYTTMVGNLGRAKQFGAINKLLDEMVRDGCQP), 398 to 432 (NTVTYNRLIHSYGRANYLNEAMNVFNQMQEAGCKP), 433 to 467 (DRVTYCTLIDIHAKAGFLDIAMDMYQRMQAGGLSP), 468 to 502 (DTFTYSVIINCLGKAGHLPAAHKLFCEMVDQGCTP), 503 to 537 (NLVTYNIMMDLHAKARNYQNALKLYRDMQNAGFEP), 538 to 572 (DKVTYSIVMEVLGHCGYLEEAEAVFTEMQQKNWIP), 573 to 607 (DEPVYGLLVDLWGKAGNVEKAWQWYQAMLHAGLRP), and 608 to 642 (NVPTCNSLLSTFLRVNKIAEAYELLQNMLALGLRP). The region spanning 760-843 (INLHVMSEGT…NSGCFVGSGE (84 aa)) is the Smr domain.

The protein belongs to the PPR family. P subfamily.

The chain is Pentatricopeptide repeat-containing protein At1g18900 from Arabidopsis thaliana (Mouse-ear cress).